The sequence spans 345 residues: Platelet-derived growth factor C (345 aa).

The N-terminal stretch at 1-22 is a signal peptide; that stretch reads MLLLGLLLLTSALAGQRTGTRA. Residues 24–33 are compositionally biased toward polar residues; that stretch reads SNLSSKLQLS. A disordered region spans residues 24–45; sequence SNLSSKLQLSSDKEQNGVQDPR. Asn-25 is a glycosylation site (N-linked (GlcNAc...) asparagine). Over residues 34–45 the composition is skewed to basic and acidic residues; that stretch reads SDKEQNGVQDPR. In terms of domain architecture, CUB spans 46 to 163; sequence HERVVTISGN…PGFCIHYSII (118 aa). N-linked (GlcNAc...) asparagine glycosylation occurs at Asn-55. Disulfide bonds link Cys-104–Cys-124, Cys-250–Cys-294, Cys-280–Cys-335, and Cys-287–Cys-337.

This sequence belongs to the PDGF/VEGF growth factor family. In terms of assembly, homodimer; disulfide-linked. Interacts with PDGFRA homodimers, and with heterodimers formed by PDGFRA and PDGFRB. Interacts (via CUB domain) with PLAT (via kringle domain). Post-translationally, proteolytic removal of the N-terminal CUB domain releasing the core domain is necessary for unmasking the receptor-binding epitopes of the core domain. Cleavage after basic residues in the hinge region (region connecting the CUB and growth factor domains) gives rise to the receptor-binding form. Cleaved by PLAT and PLG. Sumoylated with SUMO1. In terms of processing, N-glycosylated. In terms of tissue distribution, highly expressed in the kidney and adrenal gland. In the kidney, it is expressed in arteriolar smooth muscle cells and in epithelial cells of individual segments (at protein level).

Its subcellular location is the cytoplasm. The protein resides in the cytosol. It localises to the secreted. It is found in the nucleus. The protein localises to the cytoplasmic granule. Its subcellular location is the cell membrane. Its function is as follows. Growth factor that plays an essential role in the regulation of embryonic development, cell proliferation, cell migration, survival and chemotaxis. Potent mitogen and chemoattractant for cells of mesenchymal origin. Required for normal skeleton formation during embryonic development, especially for normal development of the craniofacial skeleton and for normal development of the palate. Required for normal skin morphogenesis during embryonic development. Plays an important role in wound healing, where it appears to be involved in three stages: inflammation, proliferation and remodeling. Plays an important role in angiogenesis and blood vessel development. Involved in fibrotic processes, in which transformation of interstitial fibroblasts into myofibroblasts plus collagen deposition occurs. The CUB domain has mitogenic activity in coronary artery smooth muscle cells, suggesting a role beyond the maintenance of the latency of the PDGF domain. In the nucleus, PDGFC seems to have additional function. The chain is Platelet-derived growth factor C (Pdgfc) from Rattus norvegicus (Rat).